The primary structure comprises 567 residues: MATIDKHSYAHMFGPTVGDRVRLADTDLWLEVEKDYTQYGEEVKFGGGKVIRDGMGQSQASCFDTVDLVITNALIVDHWGIIKADVGIKEGRIAIIGKAGNPDIQDNIDIEIGPGTEVIAGEGKILTAGGIDAHIHFICPQQIEEAQMSGVTTMIGGGTGPATGTNATTCTSGPWNIHKMLQATNDFAMNFGFLGKGNTSLPLALEEQIEAGVCGLKLHEDWGTTPASIDNCLAVAERYDVQVAIHTDTLNEAGFVEDTMAAFKGRTIHTYHTEGAGGGHSPDIIRACGEPNVLPSSTNPTRPYTVNTIDEHLDMLMVCHHLDPSIPEDVAFADSRIRKESIAAEDIMHDLGAISMIASDSQAMGRVGEMITRTWQTANKMKQQRGPLAPDTERNDNFRIKRYIAKYTINPAISHGISHEVGSIEVGKLADLVLWKPAFFGIKPAMILKSGFIAAAPMGDANASIPTPQPVYYRPMFGSFGSAAAKTSMTFLSQAAIDQGVPEKIGMTRMVGVCKNTRNIGKKDMIHNNWQPKIEVDAQTYEVRADGELLTCEPATELPLTQRYCLF.

The region spanning 129–567 is the Urease domain; it reads GGIDAHIHFI…LPLTQRYCLF (439 aa). Ni(2+) is bound by residues His-134, His-136, and Lys-217. Position 217 is an N6-carboxylysine (Lys-217). His-219 is a binding site for substrate. The Ni(2+) site is built by His-246 and His-272. Catalysis depends on His-320, which acts as the Proton donor. A Ni(2+)-binding site is contributed by Asp-360.

Belongs to the metallo-dependent hydrolases superfamily. Urease alpha subunit family. In terms of assembly, heterotrimer of UreA (gamma), UreB (beta) and UreC (alpha) subunits. Three heterotrimers associate to form the active enzyme. Ni cation serves as cofactor. In terms of processing, carboxylation allows a single lysine to coordinate two nickel ions.

The protein localises to the cytoplasm. The catalysed reaction is urea + 2 H2O + H(+) = hydrogencarbonate + 2 NH4(+). It functions in the pathway nitrogen metabolism; urea degradation; CO(2) and NH(3) from urea (urease route): step 1/1. This Psychromonas ingrahamii (strain DSM 17664 / CCUG 51855 / 37) protein is Urease subunit alpha.